The primary structure comprises 975 residues: Kinesin-like protein KIN-14K (975 aa).

The segment at 1-40 (MKNRIKKGSSMIGVYGRSDGSSSIQSSNGSESRESIDDNK) is disordered. Residues 17–30 (RSDGSSSIQSSNGS) show a composition bias toward low complexity. Residues 31-40 (ESRESIDDNK) are compositionally biased toward basic and acidic residues. One can recognise a Calponin-homology (CH) domain in the interval 40-143 (KQGHQSLVEW…SLKALKASFS (104 aa)). Residues 289–345 (KERSNAELSKLKQELEIVKETHEKQFLELKLNAQKAKVELERQVKNSELRVVEAKEL) are a coiled coil. In terms of domain architecture, Kinesin motor spans 436-746 (NIRVYCRIRP…LKFAERVSGV (311 aa)). 520–527 (GQTGSGKT) lines the ATP pocket. Residues 757-788 (GRDVRQLMEQVSNLKDMIAKKDEELQKFQNIN) are a coiled coil. Disordered stretches follow at residues 801–852 (VSPP…GAKD) and 900–975 (LFPE…NRKR). The segment covering 944–958 (LSISTTSSKALTSSK) has biased composition (low complexity).

Belongs to the TRAFAC class myosin-kinesin ATPase superfamily. Kinesin family. KIN-14 subfamily.

This Arabidopsis thaliana (Mouse-ear cress) protein is Kinesin-like protein KIN-14K.